Here is a 163-residue protein sequence, read N- to C-terminus: MTSIAISSGSFDPITLGHLDIIKRGAKVFDEVYVVVLNNSSKKPFFSVEERLELIREATKDIPNVKVDSHSGLLVEYAKMRNANAILRGLRAVSDFEYEMQITSMNRKLDESIETFFIMTNNQYSFLSSSIVKEVARYGGSVVDLVPPIVERALKEKFKTPLK.

Residue serine 10 participates in substrate binding. Residues 10 to 11 and histidine 18 contribute to the ATP site; that span reads SF. Positions 42, 74, and 88 each coordinate substrate. Residues 89-91, glutamate 99, and 124-130 contribute to the ATP site; these read GLR and YSFLSSS.

Belongs to the bacterial CoaD family. As to quaternary structure, homohexamer. Requires Mg(2+) as cofactor.

The protein localises to the cytoplasm. It carries out the reaction (R)-4'-phosphopantetheine + ATP + H(+) = 3'-dephospho-CoA + diphosphate. The protein operates within cofactor biosynthesis; coenzyme A biosynthesis; CoA from (R)-pantothenate: step 4/5. Functionally, reversibly transfers an adenylyl group from ATP to 4'-phosphopantetheine, yielding dephospho-CoA (dPCoA) and pyrophosphate. The sequence is that of Phosphopantetheine adenylyltransferase from Bacillus mycoides (strain KBAB4) (Bacillus weihenstephanensis).